The primary structure comprises 837 residues: Histone acetyltransferase KAT2A (837 aa).

The disordered stretch occupies residues 1–99; it reads MAEPSQAPTP…RKAQVRGLPR (99 aa). Ala-2 is modified (N-acetylalanine). The span at 7-51 shows a compositional bias: pro residues; the sequence is APTPAPAAQPRPLQSPAPAPTPTPAPSPASAPIPTPTPAPAPAPA. Over residues 58 to 74 the composition is skewed to gly residues; that stretch reads TGTGGPGVGSGGAGSGG. A compositionally biased stretch (low complexity) spans 75-87; that stretch reads DPARPGLSQQQRA. The span at 88–99 shows a compositional bias: basic residues; it reads SQRKAQVRGLPR. Ser-307 is modified (phosphoserine). A disordered region spans residues 407 to 434; the sequence is FSPSMGGGSNSSLSLDSAGAEPMPGEKR. Positions 416–425 are enriched in low complexity; sequence NSSLSLDSAG. Positions 503-656 constitute an N-acetyltransferase domain; it reads VIGNSLTPKA…GATLMECELN (154 aa). The residue at position 549 (Lys-549) is an N6-acetyllysine. The active-site Proton donor/acceptor is the Glu-575. Residues 579 to 581, 586 to 592, and Tyr-617 contribute to the acetyl-CoA site; these read CAV and QVKGYGT. Residues 579–581, 586–592, and Tyr-617 contribute to the succinyl-CoA site; these read CAV and QVKGYGT. Residues 639 to 648 form a loop 3 region; sequence LGYIKDYEGA. Lys-728 participates in a covalent cross-link: Glycyl lysine isopeptide (Lys-Gly) (interchain with G-Cter in SUMO2). Residues 728–832 form the Bromo domain; the sequence is KDPDQLYTTL…KFFYFKLKEG (105 aa). Thr-735 carries the phosphothreonine modification. Residues Lys-759 and Lys-791 each participate in a glycyl lysine isopeptide (Lys-Gly) (interchain with G-Cter in SUMO2) cross-link.

Belongs to the acetyltransferase family. GCN5 subfamily. In terms of assembly, homooligomer; may form a tetramer of homodimers. Interacts with EP300, CREBBP and ADA2. Component of the TFTC-HAT complex, at least composed of TAF5L, TAF6L, TAF3, TADA3L, SUPT3H/SPT3, TAF2/TAFII150, TAF4/TAFII135, TAF5/TAFII100, KAT2A/GCN5L2, TAF10 and TRRAP. Component of the STAGA transcription coactivator-HAT complex, at least composed of SUPT3H, KAT2A, SUPT7L, TAF5L, TAF6L, TADA3L, TAD1L, TAF10, TAF12, TRRAP and TAF9. The STAGA core complex is associated with a subcomplex required for histone deubiquitination composed of ATXN7L3, ENY2 and USP22. Component of the ADA2A-containing complex (ATAC), composed of KAT14, KAT2A, TADA2L, TADA3L, ZZ3, MBIP, WDR5, YEATS2, CCDC101 and DR1. In the complex, it probably interacts directly with KAT14, MBIP and WDR5. Interacts with PML. Interacts with CEBPB. Interacts with TACC1, TACC2 and TACC3. Interacts with RELA. Interacts with NFATC2. Interacts with TBX5. Interacts with PLK4. Associates with the 2-oxoglutarate dehydrogenase complex. Interacts with XPC; leading to KAT2A recruitment to promoters and subsequent acetylation of histones. Interacts with ERCC3/XPB; leading to KAT2A recruitment to promoters and subsequent acetylation of histones. Interacts with ISL1. Interactions of ISL1 with MLIP1 or KAT2A may be mutually exclusive. As to quaternary structure, (Microbial infection) Interacts with and acetylates HIV-1 Tat. Acetylated at Lys-549, inhibiting the protein acetyltransferase activity. Deacetylation at Lys-549 by SIRT6 promotes phosphorylation at Ser-307 and Thr-735 and subsequent activation of the protein acetyltransferase activity, leading to acetylation and inactivation of PPARGC1A. As to expression, expressed in all tissues tested.

The protein resides in the nucleus. It is found in the chromosome. The protein localises to the cytoplasm. It localises to the cytoskeleton. Its subcellular location is the microtubule organizing center. The protein resides in the centrosome. The catalysed reaction is L-lysyl-[histone] + acetyl-CoA = N(6)-acetyl-L-lysyl-[histone] + CoA + H(+). It catalyses the reaction L-lysyl-[protein] + acetyl-CoA = N(6)-acetyl-L-lysyl-[protein] + CoA + H(+). It carries out the reaction succinyl-CoA + L-lysyl-[protein] = N(6)-succinyl-L-lysyl-[protein] + CoA + H(+). The enzyme catalyses glutaryl-CoA + L-lysyl-[protein] = N(6)-glutaryl-L-lysyl-[protein] + CoA + H(+). Functionally, protein lysine acyltransferase that can act as a acetyltransferase, glutaryltransferase, succinyltransferase or malonyltransferase, depending on the context. Acts as a histone lysine succinyltransferase: catalyzes succinylation of histone H3 on 'Lys-79' (H3K79succ), with a maximum frequency around the transcription start sites of genes. Succinylation of histones gives a specific tag for epigenetic transcription activation. Association with the 2-oxoglutarate dehydrogenase complex, which provides succinyl-CoA, is required for histone succinylation. In different complexes, functions either as an acetyltransferase (HAT) or as a succinyltransferase: in the SAGA and ATAC complexes, acts as a histone acetyltransferase. Has significant histone acetyltransferase activity with core histones, but not with nucleosome core particles. Has a a strong preference for acetylation of H3 at 'Lys-9' (H3K9ac). Acetylation of histones gives a specific tag for epigenetic transcription activation. Recruited by the XPC complex at promoters, where it specifically mediates acetylation of histone variant H2A.Z.1/H2A.Z, thereby promoting expression of target genes. Involved in long-term memory consolidation and synaptic plasticity: acts by promoting expression of a hippocampal gene expression network linked to neuroactive receptor signaling. Acts as a positive regulator of T-cell activation: upon TCR stimulation, recruited to the IL2 promoter following interaction with NFATC2 and catalyzes acetylation of histone H3 at 'Lys-9' (H3K9ac), leading to promote IL2 expression. Required for growth and differentiation of craniofacial cartilage and bone by regulating acetylation of histone H3 at 'Lys-9' (H3K9ac). Regulates embryonic stem cell (ESC) pluripotency and differentiation. Also acetylates non-histone proteins, such as CEBPB, MRE11, PPARGC1A, PLK4 and TBX5. Involved in heart and limb development by mediating acetylation of TBX5, acetylation regulating nucleocytoplasmic shuttling of TBX5. Acts as a negative regulator of centrosome amplification by mediating acetylation of PLK4. Acts as a negative regulator of gluconeogenesis by mediating acetylation and subsequent inactivation of PPARGC1A. Also acts as a histone glutaryltransferase: catalyzes glutarylation of histone H4 on 'Lys-91' (H4K91glu), a mark that destabilizes nucleosomes by promoting dissociation of the H2A-H2B dimers from nucleosomes. Its function is as follows. (Microbial infection) In case of HIV-1 infection, it is recruited by the viral protein Tat. Regulates Tat's transactivating activity and may help inducing chromatin remodeling of proviral genes. The protein is Histone acetyltransferase KAT2A of Homo sapiens (Human).